The following is a 468-amino-acid chain: Tyrosine-protein phosphatase YopH (468 aa).

The tract at residues 127 to 194 is disordered; sequence ARGHVSSHSH…TVSPYGPEAR (68 aa). The span at 130–141 shows a compositional bias: low complexity; sequence HVSSHSHSALHA. Residues 152 to 461 enclose the Tyrosine-protein phosphatase domain; sequence SHLDPRTPPL…DVLIKLAEGQ (310 aa). Cysteine 403 acts as the Phosphocysteine intermediate in catalysis.

Belongs to the protein-tyrosine phosphatase family. Non-receptor class subfamily.

It localises to the secreted. The catalysed reaction is O-phospho-L-tyrosyl-[protein] + H2O = L-tyrosyl-[protein] + phosphate. Its function is as follows. Essential virulence determinant. This protein is a protein tyrosine phosphatase. The essential function of YopH in Yersinia pathogenesis is host-protein dephosphorylation. It contributes to the ability of the bacteria to resist phagocytosis by peritoneal macrophages. The protein is Tyrosine-protein phosphatase YopH (yopH) of Yersinia pseudotuberculosis serotype I (strain IP32953).